A 322-amino-acid chain; its full sequence is MRHAIALTAAAALLPNCAIRPLPEDVTRLNTYAIVTRIRCEARDAVLSELLEYLKNSRSNVSPEIVTQIEEDPNTIANFDRSRLPNATRKKIDLYANAAIVYDFEFDMSQHSRNSLGATLNDTWSSGIFNLGVSGAHERTRRNQRRFRVEDNFYKLFTDPPRCEPYSENGKFKREKNYAYPITGYIGLQEIIDTFWRLNEDHILGSTDSGQPKVNKLADEIQFTTKNSFSATPSAELDPANHLKIVAVDAESSHWRQDIHTVTIGVAVQDEEEEPRDERRPRRRLGKAQSAIKNANDAINELQLRNIQILNRSDLQQLLPNL.

The disordered stretch occupies residues 269-289 (QDEEEEPRDERRPRRRLGKAQ).

This is an uncharacterized protein from Sinorhizobium fredii (strain NBRC 101917 / NGR234).